The chain runs to 138 residues: Transcription antitermination protein NusB (138 aa).

This sequence belongs to the NusB family.

In terms of biological role, involved in transcription antitermination. Required for transcription of ribosomal RNA (rRNA) genes. Binds specifically to the boxA antiterminator sequence of the ribosomal RNA (rrn) operons. This chain is Transcription antitermination protein NusB, found in Photorhabdus laumondii subsp. laumondii (strain DSM 15139 / CIP 105565 / TT01) (Photorhabdus luminescens subsp. laumondii).